The chain runs to 758 residues: 5-methyltetrahydropteroyltriglutamate--homocysteine methyltransferase (758 aa).

Residues 17 to 20 (RELK) and Lys-117 each bind 5-methyltetrahydropteroyltri-L-glutamate. Residues 434–436 (IGS) and Glu-487 contribute to the L-homocysteine site. L-methionine is bound by residues 434–436 (IGS) and Glu-487. 5-methyltetrahydropteroyltri-L-glutamate is bound by residues 518-519 (RC) and Trp-564. Asp-602 is an L-homocysteine binding site. Asp-602 contacts L-methionine. Glu-608 lines the 5-methyltetrahydropteroyltri-L-glutamate pocket. Residues His-644, Cys-646, and Glu-668 each coordinate Zn(2+). His-697 (proton donor) is an active-site residue. Cys-729 lines the Zn(2+) pocket.

The protein belongs to the vitamin-B12 independent methionine synthase family. Zn(2+) serves as cofactor.

It carries out the reaction 5-methyltetrahydropteroyltri-L-glutamate + L-homocysteine = tetrahydropteroyltri-L-glutamate + L-methionine. Its pathway is amino-acid biosynthesis; L-methionine biosynthesis via de novo pathway; L-methionine from L-homocysteine (MetE route): step 1/1. Its function is as follows. Catalyzes the transfer of a methyl group from 5-methyltetrahydrofolate to homocysteine resulting in methionine formation. This is 5-methyltetrahydropteroyltriglutamate--homocysteine methyltransferase from Photorhabdus laumondii subsp. laumondii (strain DSM 15139 / CIP 105565 / TT01) (Photorhabdus luminescens subsp. laumondii).